A 2013-amino-acid chain; its full sequence is Centrosomal protein 224 (2013 aa).

HEAT repeat units lie at residues Thr115–Thr153, Gln158–Lys196, Pro200–Lys238, Thr348–Ser386, and Thr427–Glu465. The tract at residues Pro512–Asn557 is disordered. Over residues Thr524–Ser543 the composition is skewed to low complexity. HEAT repeat units lie at residues Ile724–Ala762, Val816–Arg854, Gln857–Gly895, Glu899–Gly937, and Pro977–Leu1015. The segment at Lys1043–Gln1109 is disordered. Residues Lys1053–Ser1106 are compositionally biased toward low complexity. 3 HEAT repeats span residues Glu1240–Pro1279, Val1281–Ala1314, and Cys1317–Asp1353. 3 stretches are compositionally biased toward low complexity: residues Asn1372–Gln1406, Asn1695–Ser1735, and Ser1746–Thr1796. Disordered regions lie at residues Asn1372–Thr1413, Asn1695–Lys1809, Asn1905–Gln1949, and Thr1966–Ser1995. The segment covering Ile1799–Lys1809 has biased composition (basic and acidic residues). The segment covering Asn1913 to Asn1939 has biased composition (low complexity). The span at Ser1940–Gln1949 shows a compositional bias: polar residues. Over residues Leu1967–Ser1995 the composition is skewed to low complexity.

It belongs to the TOG/XMAP215 family. Interacts with eb1 at the microtubule tip, centrosome and kinetochore. Interacts with lis1 in the cortical attachment of microtubules.

It is found in the cytoplasm. The protein localises to the cytoskeleton. The protein resides in the microtubule organizing center. Its subcellular location is the centrosome. It localises to the chromosome. It is found in the centromere. The protein localises to the kinetochore. Involved in regulation of microtubule dynamics. Regulates the interaction of microtubules tips with the centrosome and cell cortex. The protein is Centrosomal protein 224 (mtaA) of Dictyostelium discoideum (Social amoeba).